Here is a 345-residue protein sequence, read N- to C-terminus: MRVADFSFDLPDELIARYPMAQRNASRLLTLDGNSGALGDKQFTDLLGMINPGDLMVFNNTRVIPARMFGQKASGGKLEILVERMLDDKRILAHVRSSKSPKVDSFILLDGGYQMKMVARHDTLFELELLSELTILEVLEAVGHMPLPPYIDRPDEDADKERYQTVYNQNPGAVAAPTAGLHFDDAMLDALKAKDVNIAFVTLHVGAGTFQPVRVDTILEHKMHSEWANVPQDVVDLIAQTKAAGKRVVAVGTTSVRSLESAARASQGELKAFSGDTDIFIYPGYQFQVVDAMVTNFHLPESTLIMLVSAFAGFDHVMAAYQHAIAQKYRFFSYGDAMFVTKKAH.

It belongs to the QueA family. In terms of assembly, monomer.

Its subcellular location is the cytoplasm. The catalysed reaction is 7-aminomethyl-7-carbaguanosine(34) in tRNA + S-adenosyl-L-methionine = epoxyqueuosine(34) in tRNA + adenine + L-methionine + 2 H(+). It participates in tRNA modification; tRNA-queuosine biosynthesis. Functionally, transfers and isomerizes the ribose moiety from AdoMet to the 7-aminomethyl group of 7-deazaguanine (preQ1-tRNA) to give epoxyqueuosine (oQ-tRNA). The sequence is that of S-adenosylmethionine:tRNA ribosyltransferase-isomerase from Shewanella baltica (strain OS155 / ATCC BAA-1091).